The sequence spans 511 residues: Glucans biosynthesis protein G (511 aa).

An N-terminal signal peptide occupies residues 1 to 22 (MMKMRWLGAAIMLTLYASSSWA).

It belongs to the OpgD/OpgG family.

It is found in the periplasm. The protein operates within glycan metabolism; osmoregulated periplasmic glucan (OPG) biosynthesis. Its function is as follows. Involved in the biosynthesis of osmoregulated periplasmic glucans (OPGs). The chain is Glucans biosynthesis protein G from Salmonella paratyphi A (strain ATCC 9150 / SARB42).